Here is an 84-residue protein sequence, read N- to C-terminus: Small ribosomal subunit protein uS17 (84 aa).

The protein belongs to the universal ribosomal protein uS17 family. Part of the 30S ribosomal subunit.

Functionally, one of the primary rRNA binding proteins, it binds specifically to the 5'-end of 16S ribosomal RNA. The chain is Small ribosomal subunit protein uS17 from Vibrio parahaemolyticus serotype O3:K6 (strain RIMD 2210633).